Consider the following 665-residue polypeptide: Succinate dehydrogenase [ubiquinone] flavoprotein subunit B, mitochondrial (665 aa).

The N-terminal 45 residues, 1–45, are a transit peptide targeting the mitochondrion; that stretch reads MALLKVAPSRLLSRALQLTSTLQNCTATSIAARRNFHFTVYGRKD. Positions 72, 75, 94, 95, and 101 each coordinate FAD. His-102 bears the Tele-8alpha-FAD histidine mark. Thr-103, Gly-108, Ala-224, and Asp-278 together coordinate FAD. His-299, Arg-343, and His-410 together coordinate oxaloacetate. Arg-343 functions as the Proton acceptor in the catalytic mechanism. Glu-443 lines the FAD pocket. Residues Arg-454 and Ala-457 each coordinate oxaloacetate. FAD contacts are provided by Ser-459 and Leu-460.

The protein belongs to the FAD-dependent oxidoreductase 2 family. FRD/SDH subfamily. Component of complex II composed of four subunits: a flavoprotein (FP), an iron-sulfur protein (IP), and a cytochrome b composed of a large and a small subunit. The cofactor is FAD.

The protein resides in the mitochondrion inner membrane. It carries out the reaction a ubiquinone + succinate = a ubiquinol + fumarate. The catalysed reaction is (R)-malate + a quinone = enol-oxaloacetate + a quinol. The enzyme catalyses (S)-malate + a quinone = enol-oxaloacetate + a quinol. Its pathway is carbohydrate metabolism; tricarboxylic acid cycle; fumarate from succinate (eukaryal route): step 1/1. Its activity is regulated as follows. Enol-oxaloacetate inhibits the succinate dehydrogenase activity. Its function is as follows. Flavoprotein (FP) subunit of succinate dehydrogenase (SDH) that is involved in complex II of the mitochondrial electron transport chain and is responsible for transferring electrons from succinate to ubiquinone (coenzyme Q). SDH also oxidizes malate to the non-canonical enol form of oxaloacetate, enol-oxaloacetate. Enol-oxaloacetate, which is a potent inhibitor of the succinate dehydrogenase activity, is further isomerized into keto-oxaloacetate. This chain is Succinate dehydrogenase [ubiquinone] flavoprotein subunit B, mitochondrial (sdha-b), found in Xenopus laevis (African clawed frog).